A 175-amino-acid chain; its full sequence is ATP synthase subunit b (175 aa).

Residues 19–35 form a helical membrane-spanning segment; that stretch reads GLIFWTTVTFLIVLFIL.

The protein belongs to the ATPase B chain family. As to quaternary structure, F-type ATPases have 2 components, F(1) - the catalytic core - and F(0) - the membrane proton channel. F(1) has five subunits: alpha(3), beta(3), gamma(1), delta(1), epsilon(1). F(0) has four main subunits: a(1), b(2) and c(10-14). The alpha and beta chains form an alternating ring which encloses part of the gamma chain. F(1) is attached to F(0) by a central stalk formed by the gamma and epsilon chains, while a peripheral stalk is formed by the delta and b chains.

It localises to the cell inner membrane. Functionally, f(1)F(0) ATP synthase produces ATP from ADP in the presence of a proton or sodium gradient. F-type ATPases consist of two structural domains, F(1) containing the extramembraneous catalytic core and F(0) containing the membrane proton channel, linked together by a central stalk and a peripheral stalk. During catalysis, ATP synthesis in the catalytic domain of F(1) is coupled via a rotary mechanism of the central stalk subunits to proton translocation. Component of the F(0) channel, it forms part of the peripheral stalk, linking F(1) to F(0). This Chlorobium phaeobacteroides (strain BS1) protein is ATP synthase subunit b.